The chain runs to 79 residues: U-scoloptoxin(15)-Sm1a (79 aa).

An N-terminal signal peptide occupies residues 1-25; sequence MKMNVVVLSVVVLLLFIANIQQTEA.

It belongs to the scoloptoxin-15 family. Post-translationally, contains 2 disulfide bonds. Expressed by the venom gland.

It is found in the secreted. This chain is U-scoloptoxin(15)-Sm1a, found in Scolopendra morsitans (Tanzanian blue ringleg centipede).